A 338-amino-acid chain; its full sequence is MADKKIKIGINGFGRIGRLVARVILQRNDVELVAVNDPFITTEYMTYMFKYDSVHGQWKHNELKVKDEKTLLFGEKPVTVFGIRNPEDIPWGEAGADFVVESTGVFTDKDKAAAHLKGGAKKVVISAPSKDAPMFVVGVNEHEYKSDLNIVSNASCTTNCLAPLAKVINDRFGIVEGLMTTVHSITATQKTVDGPSMKDWRGGRAASFNIIPSSTGAAKAVGKVLPQLNGKLTGMSFRVPTVDVSVVDLTVRLEKAATYDEIKKAIKEESQGKLKGILGYTEDDVVSTDFVGDNRSSIFDAKAGIALSDNFVKLVSWYDNEWGYSTRVVDLIIHMSKA.

Residues 2 to 153 form a binding to NAD region; it reads ADKKIKIGIN…YKSDLNIVSN (152 aa). Residues 15-16 and Asp37 contribute to the NAD(+) site; that span reads RI. An external loop region spans residues 56-75; it reads GQWKHNELKVKDEKTLLFGE. Residue Arg84 coordinates NAD(+). A catalytic region spans residues 154 to 338; it reads ASCTTNCLAP…VDLIIHMSKA (185 aa). A D-glyceraldehyde 3-phosphate-binding site is contributed by 155–157; that stretch reads SCT. The active-site Nucleophile is the Cys156. Residues Cys156 and Cys160 each carry the S-nitrosocysteine modification. The segment at 183–206 is S-loop; that stretch reads HSITATQKTVDGPSMKDWRGGRAA. D-glyceraldehyde 3-phosphate contacts are provided by residues Thr186, 215-216, and Arg238; that span reads TG. Asn320 contacts NAD(+).

It belongs to the glyceraldehyde-3-phosphate dehydrogenase family. Homotetramer.

Its subcellular location is the cytoplasm. It carries out the reaction D-glyceraldehyde 3-phosphate + phosphate + NAD(+) = (2R)-3-phospho-glyceroyl phosphate + NADH + H(+). It participates in carbohydrate degradation; glycolysis; pyruvate from D-glyceraldehyde 3-phosphate: step 1/5. Its function is as follows. Key enzyme in glycolysis that catalyzes the first step of the pathway by converting D-glyceraldehyde 3-phosphate (G3P) into 3-phospho-D-glyceroyl phosphate. Essential for the maintenance of cellular ATP levels and carbohydrate metabolism. In Sinapis alba (White mustard), this protein is Glyceraldehyde-3-phosphate dehydrogenase, cytosolic (GAPC).